Reading from the N-terminus, the 318-residue chain is Galactinol synthase 1 (318 aa).

K102 is a catalytic residue. Mn(2+) is bound by residues D118, D120, and H244.

The protein belongs to the glycosyltransferase 8 family. Galactosyltransferase subfamily. It depends on a divalent metal cation as a cofactor. In terms of tissue distribution, expressed in seeds, mostly in radicle tips.

It is found in the cytoplasm. The catalysed reaction is myo-inositol + UDP-alpha-D-galactose = alpha-D-galactosyl-(1-&gt;3)-1D-myo-inositol + UDP + H(+). In terms of biological role, galactinol synthase involved in the biosynthesis of raffinose family oligosaccharides (RFOs) that function as osmoprotectants. May promote plant stress tolerance. In Solanum lycopersicum (Tomato), this protein is Galactinol synthase 1 (GOLS1).